A 387-amino-acid polypeptide reads, in one-letter code: S-adenosylmethionine synthase (387 aa).

Histidine 17 is a binding site for ATP. Position 19 (aspartate 19) interacts with Mg(2+). Glutamate 45 serves as a coordination point for K(+). 2 residues coordinate L-methionine: glutamate 58 and glutamine 101. Residues glutamine 101–arginine 111 are flexible loop. Residues aspartate 168–lysine 170, arginine 234–phenylalanine 235, aspartate 243, arginine 249–lysine 250, alanine 266, and lysine 270 each bind ATP. Aspartate 243 serves as a coordination point for L-methionine. L-methionine is bound at residue lysine 274.

The protein belongs to the AdoMet synthase family. Homotetramer; dimer of dimers. The cofactor is Mg(2+). It depends on K(+) as a cofactor.

The protein localises to the cytoplasm. The enzyme catalyses L-methionine + ATP + H2O = S-adenosyl-L-methionine + phosphate + diphosphate. Its pathway is amino-acid biosynthesis; S-adenosyl-L-methionine biosynthesis; S-adenosyl-L-methionine from L-methionine: step 1/1. Its function is as follows. Catalyzes the formation of S-adenosylmethionine (AdoMet) from methionine and ATP. The overall synthetic reaction is composed of two sequential steps, AdoMet formation and the subsequent tripolyphosphate hydrolysis which occurs prior to release of AdoMet from the enzyme. The protein is S-adenosylmethionine synthase of Bordetella petrii (strain ATCC BAA-461 / DSM 12804 / CCUG 43448).